The primary structure comprises 117 residues: Toxin CSTX-12 (117 aa).

The first 20 residues, 1-20 (MKVLVICAVLFLTIFSNSSA), serve as a signal peptide directing secretion. The propeptide occupies 21 to 47 (ETEDDFLEDESFEADDVIPFLAREQVR). Cystine bridges form between C50–C65, C57–C74, C64–C95, and C76–C93. The propeptide occupies 82–87 (RSDTAR). At A116 the chain carries Alanine amide.

Belongs to the neurotoxin 19 (CSTX) family. 12 subfamily. As to quaternary structure, heterodimer of A and B chains; disulfide-linked. Interacts with CSTX-1 (AC P81694), and with CSTX-9 (AC P58604). In terms of tissue distribution, expressed by the venom gland.

The protein localises to the secreted. Its subcellular location is the target cell membrane. Functionally, synergistic toxin that induces or increases a cytolytic effect when combined with CSTX-1 (AC P81694) or CSTX-9 (AC P58604). When alone, has a weak insecticidal activity, with an unknown molecular target. The polypeptide is Toxin CSTX-12 (Cupiennius salei (American wandering spider)).